The sequence spans 417 residues: Serine hydroxymethyltransferase (417 aa).

Residues L122 and 126–128 (GHL) each bind (6S)-5,6,7,8-tetrahydrofolate. K230 is modified (N6-(pyridoxal phosphate)lysine). (6S)-5,6,7,8-tetrahydrofolate is bound at residue 355 to 357 (SPF).

The protein belongs to the SHMT family. As to quaternary structure, homodimer. The cofactor is pyridoxal 5'-phosphate.

The protein resides in the cytoplasm. It carries out the reaction (6R)-5,10-methylene-5,6,7,8-tetrahydrofolate + glycine + H2O = (6S)-5,6,7,8-tetrahydrofolate + L-serine. The protein operates within one-carbon metabolism; tetrahydrofolate interconversion. Its pathway is amino-acid biosynthesis; glycine biosynthesis; glycine from L-serine: step 1/1. Functionally, catalyzes the reversible interconversion of serine and glycine with tetrahydrofolate (THF) serving as the one-carbon carrier. This reaction serves as the major source of one-carbon groups required for the biosynthesis of purines, thymidylate, methionine, and other important biomolecules. Also exhibits THF-independent aldolase activity toward beta-hydroxyamino acids, producing glycine and aldehydes, via a retro-aldol mechanism. In Francisella philomiragia subsp. philomiragia (strain ATCC 25017 / CCUG 19701 / FSC 153 / O#319-036), this protein is Serine hydroxymethyltransferase.